The chain runs to 350 residues: Guanine nucleotide-binding protein G(t) subunit alpha-1 (350 aa).

Residues 1-21 (MGAGASAEEKHSRELEKKLKE) form a disordered region. Gly-2 carries the N-myristoyl glycine lipid modification. Basic and acidic residues predominate over residues 7–21 (AEEKHSRELEKKLKE). The region spanning 28–350 (RTVKLLLLGA…KENLKDCGLF (323 aa)) is the G-alpha domain. The segment at 31–44 (KLLLLGAGESGKST) is G1 motif. 36 to 43 (GAGESGKS) contributes to the GTP binding site. Position 43 (Ser-43) interacts with Mg(2+). Tyr-142 bears the Phosphotyrosine; by SRC mark. Residues Asp-146, 171–177 (LRSRVKT), Gly-199, 265–268 (NKKD), and Ala-322 contribute to the GTP site. A G2 motif region spans residues 169–177 (DVLRSRVKT). Arg-174 is modified (ADP-ribosylarginine; by cholera toxin). Mg(2+) is bound at residue Thr-177. A G3 motif region spans residues 192 to 201 (FRMFDVGGQR). Residues 261-268 (VLFLNKKD) are G4 motif. The interval 320–325 (TCATDT) is G5 motif. An interaction with RHO region spans residues 340–350 (IKENLKDCGLF). ADP-ribosylcysteine; by pertussis toxin is present on Cys-347.

This sequence belongs to the G-alpha family. G(i/o/t/z) subfamily. Heterotrimeric G proteins are composed of 3 subunits alpha, beta and gamma. The alpha chain contains the guanine nucleotide binding site. Interacts with RHO. Interacts with RGS9 and PDE6G. Interacts (when myristoylated) with UNC119; interaction is required for localization in sensory neurons. In terms of tissue distribution, rod photoreceptor cells. Predominantly expressed in the retina followed by the ciliary body, iris and retinal pigment epithelium.

Its subcellular location is the cell projection. It localises to the cilium. The protein resides in the photoreceptor outer segment. The protein localises to the membrane. It is found in the photoreceptor inner segment. Functions as a signal transducer for the rod photoreceptor RHO. Required for normal RHO-mediated light perception by the retina. Guanine nucleotide-binding proteins (G proteins) function as transducers downstream of G protein-coupled receptors (GPCRs), such as the photoreceptor RHO. The alpha chain contains the guanine nucleotide binding site and alternates between an active, GTP-bound state and an inactive, GDP-bound state. Activated RHO promotes GDP release and GTP binding. Signaling is mediated via downstream effector proteins, such as cGMP-phosphodiesterase. In Homo sapiens (Human), this protein is Guanine nucleotide-binding protein G(t) subunit alpha-1 (GNAT1).